The primary structure comprises 536 residues: MDELGSRNPSIGLESIGFSDLSVVRYNFEAAQLYEEALARGEAELTAHGALCARTGQHTGRSPKDKYVVRDANTADQIWWDNNSAISPEHFEVLRRDMLAHAKGMSLYVQDLVGGADPENALPTRVVTEFAWHSLFIRNLLIRPEREALPSFQPKLTIIDLPSFKADPVRHGCRSETVIACDLTNGLVLIGGTSYAGEMKKSVFTVLNYLLPEKSVMPMHCSANVGPAGDTAIFFGLSGTGKTTLSADPNRTLIGDDEHGWSEKGVFNFEGGCYAKAIRLSEAAEPEIFATTRRFGTVMENVVLDERRLPDFDDGSLTENTRCAYPLHFIPNASKTGTAPQPRTIIMLTADAFGVLPPIAKLTPEQAMYHFLSGYTAKVAGTEKGVTEPEATFSTCFGAPFMPRHPSEYGNLLKDLIARNGVTCWLVNTGWTGGAFGTGSRMPIKVTRALLSAALDGSLNNASFRTDANFGFAVPVSVPGVEAGILDPRSTWADGVAYDTQARRLVDMFIANFAKFERHVDGSVRDAAPGARVAAE.

Substrate-binding residues include arginine 61, tyrosine 195, and lysine 201. Residues lysine 201, histidine 220, and 236-244 (GLSGTGKTT) contribute to the ATP site. Mn(2+) contacts are provided by lysine 201 and histidine 220. A Mn(2+)-binding site is contributed by aspartate 257. ATP is bound by residues glutamate 285, arginine 322, and threonine 447. Substrate is bound at residue arginine 322.

It belongs to the phosphoenolpyruvate carboxykinase (ATP) family. It depends on Mn(2+) as a cofactor.

It is found in the cytoplasm. It catalyses the reaction oxaloacetate + ATP = phosphoenolpyruvate + ADP + CO2. It participates in carbohydrate biosynthesis; gluconeogenesis. Functionally, involved in the gluconeogenesis. Catalyzes the conversion of oxaloacetate (OAA) to phosphoenolpyruvate (PEP) through direct phosphoryl transfer between the nucleoside triphosphate and OAA. The polypeptide is Phosphoenolpyruvate carboxykinase (ATP) (Rhizobium meliloti (strain 1021) (Ensifer meliloti)).